The chain runs to 512 residues: Rab11 family-interacting protein 2 (512 aa).

The region spanning 1-120 is the C2 domain; that stretch reads MMLSEQAQKW…DKQRRKTEWF (120 aa). The segment at 15 to 102 is necessary for its cellular translocation to the plasma membrane; sequence VQVTVLQAKD…GLDKFLGQVA (88 aa). Disordered regions lie at residues 169–239 and 262–285; these read DKMK…MSSE and VPESGSLKSPHRRTLSFDTSKMNQ. A compositionally biased stretch (polar residues) spans 178 to 188; the sequence is GTFSDTSSAII. The span at 226–236 shows a compositional bias: low complexity; the sequence is HSMSDLSGSHM. The residue at position 227 (serine 227) is a Phosphoserine; by MARK2. Serine 277 bears the Phosphoserine mark. The short motif at 323 to 325 is the NPF 1 element; the sequence is NPF. Basic and acidic residues predominate over residues 361–374; the sequence is ERVTGKKDSRRSDK. Residues 361–392 are disordered; sequence ERVTGKKDSRRSDKLNNGGSDSPCDLKSPNAF. Short sequence motifs (NPF) lie at residues 406-408 and 440-442; these read NPF. An FIP-RBD domain is found at 437-499; it reads PDSNPFDATA…EETPSILRVP (63 aa). Residues 465–512 form a necessary for interaction with AP2A1, RAB11A, subcellular location, endocytosis activity and homooligomerization region; sequence ELLRRKDTHIRELEDYIDNLLVRVMEETPSILRVPYEPSRKAGKFSNS.

As to quaternary structure, homooligomerizes in a Rab11-independent manner. Forms a heterooligomeric complex with RAB11FIP4. Interacts with AP2A1, MYO5B, RAB25 and REPS1. Interacts with RAB11A and RAB11B (activated GTP-bound form). Interacts with NPC1L1. Interacts (via NPF motifs) with EHD1 and EHD3. Interacts with TICAM2; this interaction directs RAB11FIP2 to the phagosome. Interacts with RAB14 and RAB25 (GTP-bound forms). Post-translationally, phosphorylation at Ser-227 by MARK2 regulates epithelial cell polarity.

The protein localises to the cell projection. It is found in the phagocytic cup. It localises to the cell membrane. The protein resides in the recycling endosome membrane. A Rab11 effector binding preferentially phosphatidylinositol 3,4,5-trisphosphate (PtdInsP3) and phosphatidic acid (PA) and acting in the regulation of the transport of vesicles from the endosomal recycling compartment (ERC) to the plasma membrane. Involved in insulin granule exocytosis. Also involved in receptor-mediated endocytosis and membrane trafficking of recycling endosomes, probably originating from clathrin-coated vesicles. Required in a complex with MYO5B and RAB11 for the transport of NPC1L1 to the plasma membrane. Also acts as a regulator of cell polarity. Plays an essential role in phagocytosis through a mechanism involving TICAM2, RAC1 and CDC42 Rho GTPases for controlling actin-dynamics. This Homo sapiens (Human) protein is Rab11 family-interacting protein 2 (RAB11FIP2).